The following is a 340-amino-acid chain: Tetraacyldisaccharide 4'-kinase (340 aa).

47–54 (SVGGTGKT) lines the ATP pocket.

It belongs to the LpxK family.

It catalyses the reaction a lipid A disaccharide + ATP = a lipid IVA + ADP + H(+). Its pathway is glycolipid biosynthesis; lipid IV(A) biosynthesis; lipid IV(A) from (3R)-3-hydroxytetradecanoyl-[acyl-carrier-protein] and UDP-N-acetyl-alpha-D-glucosamine: step 6/6. Functionally, transfers the gamma-phosphate of ATP to the 4'-position of a tetraacyldisaccharide 1-phosphate intermediate (termed DS-1-P) to form tetraacyldisaccharide 1,4'-bis-phosphate (lipid IVA). The polypeptide is Tetraacyldisaccharide 4'-kinase (Flavobacterium johnsoniae (strain ATCC 17061 / DSM 2064 / JCM 8514 / BCRC 14874 / CCUG 350202 / NBRC 14942 / NCIMB 11054 / UW101) (Cytophaga johnsonae)).